Consider the following 201-residue polypeptide: 3-isopropylmalate dehydratase small subunit (201 aa).

It belongs to the LeuD family. LeuD type 1 subfamily. Heterodimer of LeuC and LeuD.

It carries out the reaction (2R,3S)-3-isopropylmalate = (2S)-2-isopropylmalate. It participates in amino-acid biosynthesis; L-leucine biosynthesis; L-leucine from 3-methyl-2-oxobutanoate: step 2/4. Functionally, catalyzes the isomerization between 2-isopropylmalate and 3-isopropylmalate, via the formation of 2-isopropylmaleate. This Shewanella sp. (strain ANA-3) protein is 3-isopropylmalate dehydratase small subunit.